Reading from the N-terminus, the 201-residue chain is Transcriptional regulator GfcR (201 aa).

The protein belongs to the purine/pyrimidine phosphoribosyltransferase family. GfcR subfamily.

This is Transcriptional regulator GfcR from Methanobrevibacter smithii (strain ATCC 35061 / DSM 861 / OCM 144 / PS).